We begin with the raw amino-acid sequence, 125 residues long: Large-conductance mechanosensitive channel (125 aa).

The next 2 membrane-spanning stretches (helical) occupy residues 14–34 (VIDL…VQSL) and 67–87 (GSFL…FLIV).

Belongs to the MscL family. Homopentamer.

The protein localises to the cell membrane. Functionally, channel that opens in response to stretch forces in the membrane lipid bilayer. May participate in the regulation of osmotic pressure changes within the cell. The chain is Large-conductance mechanosensitive channel from Lactobacillus helveticus (strain DPC 4571).